We begin with the raw amino-acid sequence, 599 residues long: Glutamine--fructose-6-phosphate aminotransferase [isomerizing] (599 aa).

Residue cysteine 2 is the Nucleophile; for GATase activity of the active site. The Glutamine amidotransferase type-2 domain maps to 2-223; the sequence is CGIIGYIGNE…DRDIVILRKE (222 aa). SIS domains follow at residues 286 to 423 and 452 to 589; these read LGKE…IIGK and IAEE…VDKP. The For Fru-6P isomerization activity role is filled by lysine 594.

As to quaternary structure, homodimer.

The protein resides in the cytoplasm. It catalyses the reaction D-fructose 6-phosphate + L-glutamine = D-glucosamine 6-phosphate + L-glutamate. In terms of biological role, catalyzes the first step in hexosamine metabolism, converting fructose-6P into glucosamine-6P using glutamine as a nitrogen source. This is Glutamine--fructose-6-phosphate aminotransferase [isomerizing] (glmS) from Methanococcus maripaludis (strain DSM 14266 / JCM 13030 / NBRC 101832 / S2 / LL).